A 282-amino-acid chain; its full sequence is Gap junction Cx32.7 protein (282 aa).

The Cytoplasmic segment spans residues 2-13 (GEWDLLGRLLDK). A helical membrane pass occupies residues 14–36 (VQSHSTVIGKVWLTVLFVFRILV). The Extracellular segment spans residues 37–76 (LRTGADRVWGDEQSDFVCNTQQPGCENVCYDLAFPISHVR). A helical membrane pass occupies residues 77–99 (FWFLQIIAVATPKLLYLGHVLHV). The Cytoplasmic segment spans residues 100-148 (IHAEKKMKERMKKQAELDDQTNLFLRKAYKVPKYTKSSGKISIRGRLLR). A helical membrane pass occupies residues 149-171 (SYVYHLVAKIILEVLFIVGQYFL). The Extracellular segment spans residues 172–203 (YGFTLDTRYVCTRFPCPHKVDCFLSRPTEKSV). The helical transmembrane segment at 204-226 (IIWFMLVAAFVSLFLSLVELFYL) threads the bilayer. Over 227–282 (CVKAAKECMARRQDYTVTPVTPPLLARKSFKSHKEVFQNCVNEPASPENNMEEVHI) the chain is Cytoplasmic.

The protein belongs to the connexin family. Alpha-type (group II) subfamily. As to quaternary structure, a connexon is composed of a hexamer of connexins. In terms of tissue distribution, expressed equally in incompetent and competent ovaries.

It localises to the cell membrane. Its subcellular location is the cell junction. The protein localises to the gap junction. One gap junction consists of a cluster of closely packed pairs of transmembrane channels, the connexons, through which materials of low MW diffuse from one cell to a neighboring cell. The sequence is that of Gap junction Cx32.7 protein from Micropogonias undulatus (Atlantic croaker).